A 154-amino-acid chain; its full sequence is Large ribosomal subunit protein uL30 (154 aa).

It belongs to the universal ribosomal protein uL30 family. As to quaternary structure, part of the 50S ribosomal subunit.

In Methanococcus maripaludis (strain C5 / ATCC BAA-1333), this protein is Large ribosomal subunit protein uL30.